A 35-amino-acid chain; its full sequence is Photosystem II reaction center protein T (35 aa).

Residues 3–23 (ALVYTFLLVSTLGIIFFAIFF) traverse the membrane as a helical segment.

The protein belongs to the PsbT family. As to quaternary structure, PSII is composed of 1 copy each of membrane proteins PsbA, PsbB, PsbC, PsbD, PsbE, PsbF, PsbH, PsbI, PsbJ, PsbK, PsbL, PsbM, PsbT, PsbY, PsbZ, Psb30/Ycf12, at least 3 peripheral proteins of the oxygen-evolving complex and a large number of cofactors. It forms dimeric complexes.

The protein resides in the plastid. It localises to the chloroplast thylakoid membrane. Its function is as follows. Found at the monomer-monomer interface of the photosystem II (PS II) dimer, plays a role in assembly and dimerization of PSII. PSII is a light-driven water plastoquinone oxidoreductase, using light energy to abstract electrons from H(2)O, generating a proton gradient subsequently used for ATP formation. This chain is Photosystem II reaction center protein T, found in Drimys granadensis.